A 25-amino-acid chain; its full sequence is Galactose-binding lectin-2 (25 aa).

Homodimer. In terms of processing, N-glycosylated.

In terms of biological role, D-galactose specific lectin. Binds in decreasing order of affinity: melibiose, N-acetyllactosamine, D-galacturonic acid, D-galactose, methyl-alpha-D-galactoside, D-galactose, methyl-alpha-D-galactopyranoside, methyl-beta-D-galactopyranoside and lactose. Binds also the glycoproteins globotriose, asialofetuin and mucin. Possesses glycan-dependent cytotoxic activity against Burkitt's lymphoma Raji cells and erythroleukemia K562 cells. Has calcium-independent hemagglutinating activity towards human erythrocytes. In Aplysia kurodai (Kuroda's sea hare), this protein is Galactose-binding lectin-2.